Here is a 188-residue protein sequence, read N- to C-terminus: dCTP deaminase (188 aa).

109-114 (KSTYAR) contacts dCTP. Residue Glu-135 is the Proton donor/acceptor of the active site. Residues Gln-154, Tyr-168, and Gln-178 each contribute to the dCTP site.

Belongs to the dCTP deaminase family. As to quaternary structure, homotrimer.

The enzyme catalyses dCTP + H2O + H(+) = dUTP + NH4(+). It functions in the pathway pyrimidine metabolism; dUMP biosynthesis; dUMP from dCTP (dUTP route): step 1/2. Functionally, catalyzes the deamination of dCTP to dUTP. This chain is dCTP deaminase, found in Helicobacter pylori (strain P12).